Here is a 321-residue protein sequence, read N- to C-terminus: MLVDSFNRVIDYIRVSVTKQCNFRCQYCMPTTPLDFFDDEELLPLDNVLEFLKIAIDEGVKKIRITGGEPLLRKGLDEFIAKLHAYNKEVALVLSTNGFSLKKMAKGLKDAGLSRVNVSLDSLKSDRVLKISQKDALKNTLEGIEESLKVGLKLKLNTVVMKGVNDDEILELLEYAKNRSIQIRYIEFMENTHAKSLVKGLKEKEILDLIAQKYKIMGMEKPKQGSSKIYTLENGYQFGIIAPHSDDFCQSCNRIRLASDGKICPCLYYQDAIDAKEAIINKDTKMMKRLLKQSIINKPEKNMWNDKNGGTPTRAFYYTGG.

In terms of domain architecture, Radical SAM core spans 5 to 233; sequence SFNRVIDYIR…QGSSKIYTLE (229 aa). A GTP-binding site is contributed by Arg14. Residues Cys21 and Cys25 each contribute to the [4Fe-4S] cluster site. Tyr27 is an S-adenosyl-L-methionine binding site. Cys28 lines the [4Fe-4S] cluster pocket. Arg64 serves as a coordination point for GTP. Gly68 is an S-adenosyl-L-methionine binding site. Position 95 (Ser95) interacts with GTP. Ser119 contributes to the S-adenosyl-L-methionine binding site. Lys155 serves as a coordination point for GTP. Position 189 (Met189) interacts with S-adenosyl-L-methionine. Residues Cys249 and Cys252 each coordinate [4Fe-4S] cluster. 254-256 lines the GTP pocket; that stretch reads RIR. Cys266 is a [4Fe-4S] cluster binding site.

Belongs to the radical SAM superfamily. MoaA family. As to quaternary structure, monomer and homodimer. [4Fe-4S] cluster is required as a cofactor.

It carries out the reaction GTP + AH2 + S-adenosyl-L-methionine = (8S)-3',8-cyclo-7,8-dihydroguanosine 5'-triphosphate + 5'-deoxyadenosine + L-methionine + A + H(+). It participates in cofactor biosynthesis; molybdopterin biosynthesis. In terms of biological role, catalyzes the cyclization of GTP to (8S)-3',8-cyclo-7,8-dihydroguanosine 5'-triphosphate. This Helicobacter pylori (strain J99 / ATCC 700824) (Campylobacter pylori J99) protein is GTP 3',8-cyclase.